The chain runs to 477 residues: Ribulose bisphosphate carboxylase large chain (477 aa).

Positions 1 to 2 are excised as a propeptide; sequence MS. P3 is modified (N-acetylproline). K14 carries the N6,N6,N6-trimethyllysine modification. Substrate-binding residues include N123 and T173. K175 (proton acceptor) is an active-site residue. K177 is a substrate binding site. K201, D203, and E204 together coordinate Mg(2+). K201 bears the N6-carboxylysine mark. H294 serves as the catalytic Proton acceptor. Substrate contacts are provided by R295, H327, and S379.

It belongs to the RuBisCO large chain family. Type I subfamily. As to quaternary structure, heterohexadecamer of 8 large chains and 8 small chains; disulfide-linked. The disulfide link is formed within the large subunit homodimers. The cofactor is Mg(2+). The disulfide bond which can form in the large chain dimeric partners within the hexadecamer appears to be associated with oxidative stress and protein turnover.

Its subcellular location is the plastid. It is found in the chloroplast. It catalyses the reaction 2 (2R)-3-phosphoglycerate + 2 H(+) = D-ribulose 1,5-bisphosphate + CO2 + H2O. The catalysed reaction is D-ribulose 1,5-bisphosphate + O2 = 2-phosphoglycolate + (2R)-3-phosphoglycerate + 2 H(+). RuBisCO catalyzes two reactions: the carboxylation of D-ribulose 1,5-bisphosphate, the primary event in carbon dioxide fixation, as well as the oxidative fragmentation of the pentose substrate in the photorespiration process. Both reactions occur simultaneously and in competition at the same active site. The polypeptide is Ribulose bisphosphate carboxylase large chain (rbcL) (Solanum tuberosum (Potato)).